The following is a 107-amino-acid chain: UPF0145 protein CHY_0465 (107 aa).

This sequence belongs to the UPF0145 family.

The sequence is that of UPF0145 protein CHY_0465 from Carboxydothermus hydrogenoformans (strain ATCC BAA-161 / DSM 6008 / Z-2901).